A 160-amino-acid chain; its full sequence is Putative transcriptional regulator protein YobU (160 aa).

The protein is Putative transcriptional regulator protein YobU (yobU) of Bacillus subtilis (strain 168).